A 585-amino-acid chain; its full sequence is Type IV pilus assembly ATPase TfpB (585 aa).

An ATP-binding site is contributed by 346–351 (GSGKTT). Zn(2+) is bound by residues Cys-476, Cys-479, Cys-511, and Cys-514.

Belongs to the GSP E family.

The protein localises to the cytoplasm. Functionally, ATPase component of the type IV pilus (T4P). Acts as a molecular motor to provide the energy that is required for biogenesis of the pilus and the extrusion of substrates generated in the cytoplasm. TfpB is required for optimal T4P extension and, consequently, efficient natural transformation. May play a role in initiating T4P extension. This Acinetobacter baylyi (strain ATCC 33305 / BD413 / ADP1) protein is Type IV pilus assembly ATPase TfpB.